We begin with the raw amino-acid sequence, 335 residues long: Transmembrane protein 120B (335 aa).

Positions 1 to 39 (MSLQKCQEEWGELEKEFQQLQETHKVYKQKLEELNGLQN) form a coiled coil. 6 helical membrane-spanning segments follow: residues 100–122 (GLYLNLVLGNVNVTLLSNQAKFA), 130–150 (FKLYLTIILLLGAITCRFVLH), 157–177 (VFNFLLVWYYCTLTIRESILI), 193–213 (VSTFLSGVMLTWPDGLMYQIF), 268–288 (FLLPFLFFGHFWQLYNAITLF), and 300–320 (QVFVLALTFLLLFLGNFLTTL).

Belongs to the TMEM120 family.

The protein localises to the nucleus inner membrane. In terms of biological role, necessary for efficient adipogenesis. Does not show ion channel activity. This chain is Transmembrane protein 120B (tmem120b), found in Xenopus tropicalis (Western clawed frog).